We begin with the raw amino-acid sequence, 216 residues long: Probable nicotinate-nucleotide adenylyltransferase (216 aa).

This sequence belongs to the NadD family.

The catalysed reaction is nicotinate beta-D-ribonucleotide + ATP + H(+) = deamido-NAD(+) + diphosphate. It participates in cofactor biosynthesis; NAD(+) biosynthesis; deamido-NAD(+) from nicotinate D-ribonucleotide: step 1/1. Catalyzes the reversible adenylation of nicotinate mononucleotide (NaMN) to nicotinic acid adenine dinucleotide (NaAD). This Geobacillus thermodenitrificans (strain NG80-2) protein is Probable nicotinate-nucleotide adenylyltransferase.